Here is a 577-residue protein sequence, read N- to C-terminus: E3 ubiquitin protein ligase RIN3 (577 aa).

6 helical membrane passes run 3–23 (ITYL…LQVW), 58–78 (TTIA…VLSL), 120–140 (GVLW…QALA), 162–182 (YSAL…SLMI), 191–211 (YLLL…ALLI), and 272–292 (YLHI…VLFL). The segment at 337–379 (CAICREPMAKAKRLHCNHLFHLGCLRSWLDQGLNEVYSCPTCR) adopts an RING-type; atypical zinc-finger fold. The CUE domain maps to 537–577 (SILAMAETVREVLPHVPDEIIFQDLQRTNSVSVTVNNLLQM).

Interacts (via C-terminus) with RPM1 (via N-terminus).

The protein localises to the membrane. It catalyses the reaction S-ubiquitinyl-[E2 ubiquitin-conjugating enzyme]-L-cysteine + [acceptor protein]-L-lysine = [E2 ubiquitin-conjugating enzyme]-L-cysteine + N(6)-ubiquitinyl-[acceptor protein]-L-lysine.. It functions in the pathway protein modification; protein ubiquitination. E3 ubiquitin protein ligase that acts as a positive regulator of RPM1- and RPS2-dependent hypersensitive response (HR), in association with RIN2. Probably not required for RPM1 degradation during HR. In Arabidopsis thaliana (Mouse-ear cress), this protein is E3 ubiquitin protein ligase RIN3 (RIN3).